We begin with the raw amino-acid sequence, 127 residues long: Large ribosomal subunit protein bL17 (127 aa).

This sequence belongs to the bacterial ribosomal protein bL17 family. As to quaternary structure, part of the 50S ribosomal subunit. Contacts protein L32.

This chain is Large ribosomal subunit protein bL17, found in Chromohalobacter salexigens (strain ATCC BAA-138 / DSM 3043 / CIP 106854 / NCIMB 13768 / 1H11).